The primary structure comprises 46 residues: Viscotoxin-1-PS (46 aa).

3 disulfides stabilise this stretch: C3-C40, C4-C32, and C16-C26.

This sequence belongs to the plant thionin (TC 1.C.44) family.

The protein resides in the secreted. Its function is as follows. Thionins are small plant proteins which are toxic to animal cells. They seem to exert their toxic effect at the level of the cell membrane. Their precise function is not known. This chain is Viscotoxin-1-PS (THI2.4), found in Viscum album (European mistletoe).